The primary structure comprises 377 residues: Carbonic anhydrase 1 (377 aa).

An N-terminal signal peptide occupies residues methionine 1 to alanine 20. Residues aspartate 38–histidine 318 enclose the Alpha-carbonic anhydrase domain. 3 disulfide bridges follow: cysteine 61/cysteine 264, cysteine 194/cysteine 198, and cysteine 296/cysteine 351. A glycan (N-linked (GlcNAc...) asparagine) is linked at asparagine 101. Residue histidine 112 is the Proton acceptor of the active site. An N-linked (GlcNAc...) asparagine glycan is attached at asparagine 135. Histidine 163, histidine 165, and histidine 182 together coordinate Zn(2+). Substrate is bound by residues threonine 260 and threonine 260 to threonine 261. N-linked (GlcNAc...) asparagine glycosylation is present at asparagine 297.

It belongs to the alpha-carbonic anhydrase family. As to quaternary structure, tetramer of two large and two small subunits linked by two disulfide bonds. It depends on Zn(2+) as a cofactor.

It localises to the periplasm. It catalyses the reaction hydrogencarbonate + H(+) = CO2 + H2O. Reversible hydration of carbon dioxide. This chain is Carbonic anhydrase 1 (CAH1), found in Chlamydomonas reinhardtii (Chlamydomonas smithii).